Here is a 170-residue protein sequence, read N- to C-terminus: ATP synthase subunit b (170 aa).

Residues 30–50 form a helical membrane-spanning segment; sequence FFFVLAIFLVVLAVIGTFVVP.

It belongs to the ATPase B chain family. In terms of assembly, F-type ATPases have 2 components, F(1) - the catalytic core - and F(0) - the membrane proton channel. F(1) has five subunits: alpha(3), beta(3), gamma(1), delta(1), epsilon(1). F(0) has three main subunits: a(1), b(2) and c(10-14). The alpha and beta chains form an alternating ring which encloses part of the gamma chain. F(1) is attached to F(0) by a central stalk formed by the gamma and epsilon chains, while a peripheral stalk is formed by the delta and b chains.

The protein resides in the cell membrane. In terms of biological role, f(1)F(0) ATP synthase produces ATP from ADP in the presence of a proton or sodium gradient. F-type ATPases consist of two structural domains, F(1) containing the extramembraneous catalytic core and F(0) containing the membrane proton channel, linked together by a central stalk and a peripheral stalk. During catalysis, ATP synthesis in the catalytic domain of F(1) is coupled via a rotary mechanism of the central stalk subunits to proton translocation. Functionally, component of the F(0) channel, it forms part of the peripheral stalk, linking F(1) to F(0). The polypeptide is ATP synthase subunit b (Mycobacterium marinum (strain ATCC BAA-535 / M)).